The following is a 208-amino-acid chain: Holliday junction branch migration complex subunit RuvA (208 aa).

The tract at residues 1–69 is domain I; the sequence is MIGFLQGYVV…EDQMVLFGFA (69 aa). Positions 70–148 are domain II; it reads VVAERDLFRQ…EWRDQAGLKT (79 aa). The segment at 149 to 159 is flexible linker; the sequence is LPSAGPIDSVQ. Residues 159-208 are domain III; that stretch reads QEDVEMTLLALGYTSQEVMRALQAVGQNTALAKNSDTEAWIREAIAWLSQ.

Belongs to the RuvA family. In terms of assembly, homotetramer. Forms an RuvA(8)-RuvB(12)-Holliday junction (HJ) complex. HJ DNA is sandwiched between 2 RuvA tetramers; dsDNA enters through RuvA and exits via RuvB. An RuvB hexamer assembles on each DNA strand where it exits the tetramer. Each RuvB hexamer is contacted by two RuvA subunits (via domain III) on 2 adjacent RuvB subunits; this complex drives branch migration. In the full resolvosome a probable DNA-RuvA(4)-RuvB(12)-RuvC(2) complex forms which resolves the HJ.

It localises to the cytoplasm. Functionally, the RuvA-RuvB-RuvC complex processes Holliday junction (HJ) DNA during genetic recombination and DNA repair, while the RuvA-RuvB complex plays an important role in the rescue of blocked DNA replication forks via replication fork reversal (RFR). RuvA specifically binds to HJ cruciform DNA, conferring on it an open structure. The RuvB hexamer acts as an ATP-dependent pump, pulling dsDNA into and through the RuvAB complex. HJ branch migration allows RuvC to scan DNA until it finds its consensus sequence, where it cleaves and resolves the cruciform DNA. The polypeptide is Holliday junction branch migration complex subunit RuvA (Acaryochloris marina (strain MBIC 11017)).